The chain runs to 453 residues: ACT domain-containing protein ACR3 (453 aa).

ACT domains follow at residues 37–112, 130–212, 266–341, and 344–423; these read LVKV…SASQ, SIEI…KFAR, VINV…RVSE, and SLEL…VPSR.

In terms of tissue distribution, expressed in roots, cotyledons, rosette and cauline leaves, sepals, style, and pedicels and tips of young developing siliques.

In terms of biological role, may bind amino acids. The protein is ACT domain-containing protein ACR3 of Arabidopsis thaliana (Mouse-ear cress).